The primary structure comprises 332 residues: Packaging enzyme P4 (332 aa).

An involved in the regulation and mechanisms of transcription, replication and genome packaging region spans residues 111–138; it reads RWPSEGIYSGVTALMGATGSGKSITLNE. An ATP-binding site is contributed by 126–133; the sequence is GATGSGKS. Residues 310–332 form a disordered region; it reads LERGSVDTDDRNSAPRRGANFSL. Over residues 313 to 322 the composition is skewed to basic and acidic residues; the sequence is GSVDTDDRNS.

Homohexamer. Part of the packaging complex composed of RDRP, P4 and P7.

It localises to the virion. It catalyses the reaction a ribonucleoside 5'-triphosphate + H2O = a ribonucleoside 5'-diphosphate + phosphate + H(+). In terms of biological role, packaging motor with helicase and translocase activities. Part of the packaging complex that packages the viral RNA segments, replicate them into a double-stranded form and transcribe them. is one of the structural proteins of the polyhedral procapsid, which is responsible for genomic replication and transcription. Displays single-stranded RNA-stimulated NTPase activity. The polypeptide is Packaging enzyme P4 (P4) (Pseudomonas savastanoi pv. phaseolicola (Pseudomonas syringae pv. phaseolicola)).